A 470-amino-acid polypeptide reads, in one-letter code: Pyruvate kinase I (470 aa).

Arg-32 serves as a coordination point for substrate. K(+) contacts are provided by Asn-34, Ser-36, Asp-66, and Thr-67. 34 to 37 (NFSH) lines the ATP pocket. Arg-73 is a binding site for ATP. Lys-76 carries the post-translational modification N6-acetyllysine. Lys-156 is an ATP binding site. Residue Glu-222 coordinates Mg(2+). Substrate is bound by residues Gly-245, Asp-246, and Thr-278. Asp-246 serves as a coordination point for Mg(2+). Residue Lys-319 is modified to N6-acetyllysine.

Belongs to the pyruvate kinase family. As to quaternary structure, homotetramer. The cofactor is Mg(2+). It depends on K(+) as a cofactor.

It carries out the reaction pyruvate + ATP = phosphoenolpyruvate + ADP + H(+). It functions in the pathway carbohydrate degradation; glycolysis; pyruvate from D-glyceraldehyde 3-phosphate: step 5/5. The sequence is that of Pyruvate kinase I (pykF) from Escherichia coli O157:H7.